The primary structure comprises 273 residues: Spore development regulator vosA (273 aa).

A compositionally biased stretch (low complexity) spans 66–75 (STTQELQSTQ). The interval 66–86 (STTQELQSTQPIAVRQQPRAA) is disordered. The 184-residue stretch at 70–253 (ELQSTQPIAV…KEQGCIISIK (184 aa)) folds into the Velvet domain. Residues 211 to 218 (FPTLTEIK) carry the Nuclear localization signal motif. The span at 254–267 (KGNERARPRGADGR) shows a compositional bias: basic and acidic residues. Positions 254–273 (KGNERARPRGADGRSDDEDD) are disordered.

Belongs to the velvet family. VosA subfamily. Forms a heterodimeric complex with velB; the formation of the velB-vosA complex is light-dependent.

It localises to the nucleus. Its function is as follows. Component of the velB-vosA heterodimeric complex that plays a dual role in activating genes associated with spore maturation and repressing certain development-associated genes. The complex binds DNA through the DNA-binding domain of vosA that recognizes an 11-nucleotide consensus sequence 5'-CTGGCCGCGGC-3' consisting of two motifs in the promoters of key developmental regulatory genes. Positively regulates the expression of wetA and represses abaA and brlA. Acts as a crucial regulator of both conidiation capacity and conidial quality. Responsible for the synthesis and accumulation of intracellular trehalose. The polypeptide is Spore development regulator vosA (Beauveria bassiana (strain ARSEF 2860) (White muscardine disease fungus)).